The following is a 307-amino-acid chain: Regulating synaptic membrane exocytosis protein 3 (307 aa).

The interval 86–120 (STETGIAVEMRSRVTRQGSRESTDGSTNSNSSEGT) is disordered. Residues 109 to 119 (DGSTNSNSSEG) are compositionally biased toward polar residues. In terms of domain architecture, C2 spans 155 to 273 (PMGDVHIAIM…DLSAAVTGWY (119 aa)). S294 and S297 each carry phosphoserine.

Binds PPFIA3. Does not bind RAB3.

Its subcellular location is the synapse. Functionally, regulates synaptic membrane exocytosis. This is Regulating synaptic membrane exocytosis protein 3 (Rims3) from Mus musculus (Mouse).